Reading from the N-terminus, the 320-residue chain is Calnexin-independence factor 1 (320 aa).

Residues 16–36 (SAETSVGEKQPKRKRSEVRAE) are disordered.

Its subcellular location is the nucleus. It localises to the nucleolus. Its function is as follows. Induces a stably inheritable state of calnexin independence called the Cin state when overexpressed. In Schizosaccharomyces pombe (strain 972 / ATCC 24843) (Fission yeast), this protein is Calnexin-independence factor 1 (cif1).